We begin with the raw amino-acid sequence, 201 residues long: Recombination protein RecR (201 aa).

Residues 57-72 form a C4-type zinc finger; it reads CQQCRNFTEEALCEIC. The 96-residue stretch at 81 to 176 folds into the Toprim domain; the sequence is TTLCIVETPG…NISRIAHGVP (96 aa).

This sequence belongs to the RecR family.

Its function is as follows. May play a role in DNA repair. It seems to be involved in an RecBC-independent recombinational process of DNA repair. It may act with RecF and RecO. This chain is Recombination protein RecR, found in Colwellia psychrerythraea (strain 34H / ATCC BAA-681) (Vibrio psychroerythus).